The primary structure comprises 124 residues: Iron-sulfur cluster insertion protein ErpA (124 aa).

Positions 52, 116, and 118 each coordinate iron-sulfur cluster.

Belongs to the HesB/IscA family. Homodimer. Requires iron-sulfur cluster as cofactor.

Its function is as follows. Required for insertion of 4Fe-4S clusters for at least IspG. This Acidithiobacillus ferrooxidans (strain ATCC 23270 / DSM 14882 / CIP 104768 / NCIMB 8455) (Ferrobacillus ferrooxidans (strain ATCC 23270)) protein is Iron-sulfur cluster insertion protein ErpA.